A 91-amino-acid chain; its full sequence is DNA-directed RNA polymerase subunit omega (91 aa).

It belongs to the RNA polymerase subunit omega family. In terms of assembly, the RNAP catalytic core consists of 2 alpha, 1 beta, 1 beta' and 1 omega subunit. When a sigma factor is associated with the core the holoenzyme is formed, which can initiate transcription.

It catalyses the reaction RNA(n) + a ribonucleoside 5'-triphosphate = RNA(n+1) + diphosphate. Promotes RNA polymerase assembly. Latches the N- and C-terminal regions of the beta' subunit thereby facilitating its interaction with the beta and alpha subunits. The chain is DNA-directed RNA polymerase subunit omega from Syntrophus aciditrophicus (strain SB).